Reading from the N-terminus, the 130-residue chain is Small ribosomal subunit protein uS9 (130 aa).

This sequence belongs to the universal ribosomal protein uS9 family.

In Cupriavidus necator (strain ATCC 17699 / DSM 428 / KCTC 22496 / NCIMB 10442 / H16 / Stanier 337) (Ralstonia eutropha), this protein is Small ribosomal subunit protein uS9.